Consider the following 85-residue polypeptide: Small ribosomal subunit protein bS18c (85 aa).

Belongs to the bacterial ribosomal protein bS18 family. Part of the 30S ribosomal subunit.

It localises to the plastid. The protein resides in the chloroplast. The chain is Small ribosomal subunit protein bS18c from Zygnema circumcarinatum (Green alga).